The sequence spans 688 residues: Translation initiation factor IF-2 (688 aa).

Residues glycine 53–proline 101 form a disordered region. Over residues arginine 71–glycine 83 the composition is skewed to basic residues. In terms of domain architecture, tr-type G spans glutamate 190–lysine 359. Residues glycine 199–threonine 206 are G1. Residue glycine 199–threonine 206 coordinates GTP. Positions glycine 224 to histidine 228 are G2. Residues aspartate 245–glycine 248 form a G3 region. GTP is bound by residues aspartate 245–histidine 249 and asparagine 299–aspartate 302. The interval asparagine 299–aspartate 302 is G4. Residues serine 335 to isoleucine 337 are G5.

It belongs to the TRAFAC class translation factor GTPase superfamily. Classic translation factor GTPase family. IF-2 subfamily.

The protein resides in the cytoplasm. Functionally, one of the essential components for the initiation of protein synthesis. Protects formylmethionyl-tRNA from spontaneous hydrolysis and promotes its binding to the 30S ribosomal subunits. Also involved in the hydrolysis of GTP during the formation of the 70S ribosomal complex. This is Translation initiation factor IF-2 from Bacillus mycoides (strain KBAB4) (Bacillus weihenstephanensis).